We begin with the raw amino-acid sequence, 185 residues long: Probable E3 ubiquitin-protein ligase ATL44 (185 aa).

A helical transmembrane segment spans residues 29–49; it reads VVILSALLCALICVAGLAAVV. The segment at 102–144 adopts an RING-type; atypical zinc-finger fold; that stretch reads CAICLTDFADGEEIRVLPLCGHSFHVECIDKWLVSRSSCPSCR. The disordered stretch occupies residues 163 to 185; that stretch reads MKDQAHRHQHHQHSSTTIPTFLP. A compositionally biased stretch (polar residues) spans 176–185; that stretch reads SSTTIPTFLP.

The protein belongs to the RING-type zinc finger family. ATL subfamily. As to quaternary structure, interacts with BIK1. Auto-monoubiquitination. In terms of tissue distribution, expressed in stems, flowers and green siliques.

It is found in the membrane. The enzyme catalyses S-ubiquitinyl-[E2 ubiquitin-conjugating enzyme]-L-cysteine + [acceptor protein]-L-lysine = [E2 ubiquitin-conjugating enzyme]-L-cysteine + N(6)-ubiquitinyl-[acceptor protein]-L-lysine.. It functions in the pathway protein modification; protein ubiquitination. Its function is as follows. E3 ubiquitin-protein ligase that possess E3 ubiquitin ligase activity in vitro and mediates protein monoubiquitination. Triggers the monoubiquitination of phosphorylated BIK1 in response to pathogen-associated molecular pattern (PAMP) detection. In Arabidopsis thaliana (Mouse-ear cress), this protein is Probable E3 ubiquitin-protein ligase ATL44.